The primary structure comprises 576 residues: Sulfite reductase [NADPH] hemoprotein beta-component (576 aa).

[4Fe-4S] cluster is bound by residues Cys435, Cys441, Cys480, and Cys484. Siroheme is bound at residue Cys484.

This sequence belongs to the nitrite and sulfite reductase 4Fe-4S domain family. In terms of assembly, alpha(8)-beta(8). The alpha component is a flavoprotein, the beta component is a hemoprotein. The cofactor is siroheme. [4Fe-4S] cluster serves as cofactor.

The catalysed reaction is hydrogen sulfide + 3 NADP(+) + 3 H2O = sulfite + 3 NADPH + 4 H(+). Its pathway is sulfur metabolism; hydrogen sulfide biosynthesis; hydrogen sulfide from sulfite (NADPH route): step 1/1. Functionally, component of the sulfite reductase complex that catalyzes the 6-electron reduction of sulfite to sulfide. This is one of several activities required for the biosynthesis of L-cysteine from sulfate. The polypeptide is Sulfite reductase [NADPH] hemoprotein beta-component (Proteus mirabilis (strain HI4320)).